A 436-amino-acid chain; its full sequence is Trigger factor (436 aa).

Disordered stretches follow at residues 1–26 and 81–100; these read MQVS…RVEN and QESL…TGEG. One can recognise a PPIase FKBP-type domain in the interval 161 to 246; the sequence is EDRVVIDFHG…VKRVEEPQLP (86 aa).

This sequence belongs to the FKBP-type PPIase family. Tig subfamily.

It localises to the cytoplasm. It catalyses the reaction [protein]-peptidylproline (omega=180) = [protein]-peptidylproline (omega=0). Involved in protein export. Acts as a chaperone by maintaining the newly synthesized protein in an open conformation. Functions as a peptidyl-prolyl cis-trans isomerase. The protein is Trigger factor of Halorhodospira halophila (strain DSM 244 / SL1) (Ectothiorhodospira halophila (strain DSM 244 / SL1)).